A 631-amino-acid polypeptide reads, in one-letter code: Iron transport multicopper oxidase FET3 (631 aa).

An N-terminal signal peptide occupies residues 1–25; sequence MKVSTHHFLPSLLVALWSWATVAQA. The Extracellular segment spans residues 26–564; the sequence is ATHTFNWTTG…ANIPDGFTAK (539 aa). Residues Asn-31 and Asn-81 are each glycosylated (N-linked (GlcNAc...) asparagine). Plastocyanin-like domains follow at residues 50–148 and 195–297; these read ITCN…LVVE and NLII…LMLN. Cu cation is bound by residues His-85 and His-87. Asn-92 and Asn-117 each carry an N-linked (GlcNAc...) asparagine glycan. Cu cation is bound by residues His-130 and His-132. N-linked (GlcNAc...) asparagine glycosylation is found at Asn-199, Asn-203, Asn-249, Asn-270, Asn-297, Asn-364, and Asn-413. The region spanning 387–506 is the Plastocyanin-like 3 domain; it reads NPLVYGTNTN…QGLALLLIEA (120 aa). Positions 418, 421, 423, 488, 489, 490, and 494 each coordinate Cu cation. A helical membrane pass occupies residues 565–585; sequence GIVAMTFSCLAGVLGLISLST. Residues 586 to 630 are Cytoplasmic-facing; that stretch reads YGLMGVKKSEEEIIRDLGMDPDAVEKVDVSDINSDEDSSRTSKNI. Positions 610-631 are disordered; sequence EKVDVSDINSDEDSSRTSKNIE. The segment covering 622–631 has biased composition (basic and acidic residues); the sequence is DSSRTSKNIE.

It belongs to the multicopper oxidase family. It depends on Cu cation as a cofactor.

It localises to the cell membrane. Iron transport multicopper ferroxidase required for Fe(2+) high affinity uptake. Required to oxidize Fe(2+) and release it from the transporter. Essential component of copper-dependent iron transport. The polypeptide is Iron transport multicopper oxidase FET3 (FET3) (Kluyveromyces lactis (strain ATCC 8585 / CBS 2359 / DSM 70799 / NBRC 1267 / NRRL Y-1140 / WM37) (Yeast)).